The following is an 86-amino-acid chain: UPF0457 protein SERP1772 (86 aa).

This sequence belongs to the UPF0457 family.

This is UPF0457 protein SERP1772 from Staphylococcus epidermidis (strain ATCC 35984 / DSM 28319 / BCRC 17069 / CCUG 31568 / BM 3577 / RP62A).